Here is a 785-residue protein sequence, read N- to C-terminus: Uncoating factor OPG117 (785 aa).

Asp-170 is a catalytic residue. Residues 342–469 (TERGDHIVWI…ELINIINDIQ (128 aa)) are primase. The SF3 helicase domain occupies 477-639 (KNRELYEKTL…FSQPSGREAA (163 aa)). 503–510 (GETATGKS) is a binding site for ATP.

The protein belongs to the orthopoxvirus OPG117 family. Homomultimer; hexamer. Interacts with OPG148.

The protein resides in the host cytoplasm. Functionally, multifunctional protein required for genome uncoating and replication. Major viral uncoating protein that is required for the release of the viral genome from incoming viral cores containing the viral DNA genome. Possesses an ATPase activity that is required for hexamerization and uncoating. In Variola virus (isolate Human/India/Ind3/1967) (VARV), this protein is Uncoating factor OPG117 (OPG117).